Reading from the N-terminus, the 793-residue chain is WASP homolog-associated protein with actin, membranes and microtubules (793 aa).

Positions 1–253 (MDSEQPDSLD…EVATSCKLGI (253 aa)) are mediates association with membranes. A mediates interaction with microtubules region spans residues 254–623 (LKSLDEDELG…FVPVSDQTLS (370 aa)). Coiled-coil stretches lie at residues 265-290 (RRVA…SIQD) and 445-503 (LGDN…LHQH). Disordered stretches follow at residues 556–661 (SMVS…SFQG) and 675–699 (EDRP…PGSM). Over residues 566–579 (SQKRLSTAHHHKTA) the composition is skewed to basic residues. Positions 618–628 (SDQTLSGSSED) are enriched in polar residues. The tract at residues 624–793 (GSSEDLSLPP…DEPSPTEWDR (170 aa)) is mediates actin nucleation. Residues 632–654 (PPQPPAPPLPPPPPPPPPPPLPP) show a composition bias toward pro residues. WH2 domains lie at 698 to 716 (SMDE…LRKV) and 728 to 745 (VNEQ…LKKV). A coiled-coil region spans residues 755–785 (KKSTSDLERSIREALERIKKVSADSEEDNDE). The segment at 772–793 (IKKVSADSEEDNDEPSPTEWDR) is disordered. The span at 778 to 787 (DSEEDNDEPS) shows a compositional bias: acidic residues. Ser779 is subject to Phosphoserine.

Interacts with ACTR3; indicative for an association with the ARP2/3 complex. Associates with microtubules; in vitro binds to tubulin heterodimer in a 1:1 stoichiometry; decorates microtubules with a repeat of 80 A along protofilaments. Interacts with RHOD (in GTP-bound form).

It localises to the cytoplasm. The protein resides in the endoplasmic reticulum-Golgi intermediate compartment. The protein localises to the cytoplasmic vesicle membrane. It is found in the golgi apparatus. Its subcellular location is the cis-Golgi network. Its function is as follows. Acts as a nucleation-promoting factor (NPF) that stimulates Arp2/3-mediated actin polymerization both at the Golgi apparatus and along tubular membranes. Involved as a regulator of Golgi positioning and morphology. Its activity in membrane tubulation requires F-actin and interaction with microtubules. Proposed to use coordinated actin-nucleating and microtubule-binding activities of distinct WHAMM molecules to drive membrane tubule elongation; when MT-bound can recruit and remodel membrane vesicles but is prevented to activate the Arp2/3 complex. Required for RhoD-dependent actin reorganization such as in cell adhesion and cell migration. Participates in vesicle transport between the endoplasmic reticulum and the Golgi complex. The sequence is that of WASP homolog-associated protein with actin, membranes and microtubules (Whamm) from Mus musculus (Mouse).